The sequence spans 406 residues: L-carnitine CoA-transferase (406 aa).

2 residues coordinate CoA: K98 and R105. Catalysis depends on D170, which acts as the Nucleophile.

It belongs to the CoA-transferase III family. CaiB subfamily. As to quaternary structure, homodimer.

The protein localises to the cytoplasm. It catalyses the reaction crotonobetainyl-CoA + (R)-carnitine = crotonobetaine + (R)-carnitinyl-CoA. It carries out the reaction 4-(trimethylamino)butanoyl-CoA + (R)-carnitine = (R)-carnitinyl-CoA + 4-(trimethylamino)butanoate. Its pathway is amine and polyamine metabolism; carnitine metabolism. Its function is as follows. Catalyzes the reversible transfer of the CoA moiety from gamma-butyrobetainyl-CoA to L-carnitine to generate L-carnitinyl-CoA and gamma-butyrobetaine. Is also able to catalyze the reversible transfer of the CoA moiety from gamma-butyrobetainyl-CoA or L-carnitinyl-CoA to crotonobetaine to generate crotonobetainyl-CoA. The protein is L-carnitine CoA-transferase of Proteus mirabilis (strain HI4320).